Here is a 354-residue protein sequence, read N- to C-terminus: Protein RecA (354 aa).

67-74 (GPESSGKT) serves as a coordination point for ATP.

This sequence belongs to the RecA family.

The protein localises to the cytoplasm. Can catalyze the hydrolysis of ATP in the presence of single-stranded DNA, the ATP-dependent uptake of single-stranded DNA by duplex DNA, and the ATP-dependent hybridization of homologous single-stranded DNAs. It interacts with LexA causing its activation and leading to its autocatalytic cleavage. This chain is Protein RecA, found in Enterobacter agglomerans (Erwinia herbicola).